The following is a 273-amino-acid chain: Chondrolectin (273 aa).

Residues 1–21 (MIRIASLLLGAALLCAQGAFA) form the signal peptide. The Extracellular segment spans residues 22-216 (RRVVSGQKVC…VVTEAGIIPN (195 aa)). Positions 35-179 (VKHPCYKMAY…CNMKHNYICK (145 aa)) constitute a C-type lectin domain. 2 disulfides stabilise this stretch: cysteine 61–cysteine 178 and cysteine 144–cysteine 170. N-linked (GlcNAc...) asparagine glycosylation is present at asparagine 86. The helical transmembrane segment at 217–237 (LIYVIIPTIPLLLLILVALGT) threads the bilayer. Residues 238-273 (CCFQMLHKSKGRSKTSPNQSTLWISKSTRKESGMEV) lie on the Cytoplasmic side of the membrane. Positions 247-273 (KGRSKTSPNQSTLWISKSTRKESGMEV) are disordered. Positions 251-263 (KTSPNQSTLWISK) are enriched in polar residues.

In terms of assembly, interacts with RABGGTB. In terms of tissue distribution, in adult mice preferentially expressed in skeletal muscle, testis, brain, and lung. Expressed in striated muscle (at protein level). Expressed in spinal cord. Detected in spinal cord fast motor neurons (at protein level).

The protein resides in the membrane. Functionally, may play a role in the development of the nervous system such as in neurite outgrowth and elongation. May be involved in motor axon growth and guidance. In Mus musculus (Mouse), this protein is Chondrolectin (Chodl).